A 337-amino-acid chain; its full sequence is uncharacterized protein (337 aa).

The MurNAc-LAA domain occupies 3-174 (IAVRGGHNFK…IGKLIAEAIN (172 aa)).

The protein to C.perfringens pIP404 ORF10.

This is an uncharacterized protein from Clostridium perfringens (strain 13 / Type A).